We begin with the raw amino-acid sequence, 309 residues long: Mitochondrial brown fat uncoupling protein 1 (309 aa).

Residues 2–10 (VGHTESDVP) lie on the Mitochondrial intermembrane side of the membrane. A helical membrane pass occupies residues 11–32 (PTMAVKIFSAGVAACVADIITF). Solcar repeat units follow at residues 11-106 (PTMA…VQEF), 113-203 (ASLG…MKEA), and 212-297 (DDVP…LKQE). The Mitochondrial matrix segment spans residues 33–77 (PLDTAKVRLQVGSAIQGECLISSAIRYKGVLGTIITLAKTEGPVK). A fatty acid 16:0-binding site is contributed by lysine 60. Residues 78–100 (LYSGLPAGLQRQISFASLRIGLY) form a helical membrane-spanning segment. The Mitochondrial intermembrane portion of the chain corresponds to 101–118 (DTVQEFFTTGKEASLGSK). Residues 119 to 135 (ISAGLMTGGVAVFIGQP) form a helical membrane-spanning segment. Over 136–180 (TEVVKVRLQAQSHLHGPKPRYTGTYNAYRIIATTEGLTGLWKGTT) the chain is Mitochondrial matrix. The helical transmembrane segment at 181–197 (PNLTRNVIINCTELVTY) threads the bilayer. Residues 198–214 (DLMKEALVKNKLLADDV) are Mitochondrial intermembrane-facing. Residues 215 to 234 (PCHFVSAVVAGFCTTVLSSP) traverse the membrane as a helical segment. Residues 235–268 (VDVVKTRFVNSSPGQYTSVPNCAMMMLTREGPSA) are Mitochondrial matrix-facing. Cysteine 256 is subject to Cysteine sulfenic acid (-SOH). A helical membrane pass occupies residues 269–291 (FFKGFVPSFLRLGSWNIIMFVCF). Lysine 271 serves as a coordination point for fatty acid 16:0. The Mitochondrial intermembrane portion of the chain corresponds to 292 to 309 (EQLKQELMKSRHTMDCAT).

Belongs to the mitochondrial carrier (TC 2.A.29) family. In terms of assembly, most probably functions as a monomer. Binds one purine nucleotide per monomer. However, has also been suggested to function as a homodimer or a homotetramer. Tightly associates with cardiolipin in the mitochondrion inner membrane; may stabilize and regulate its activity. In terms of processing, may undergo sulfenylation upon cold exposure. May increase the sensitivity of UCP1 thermogenic function to the activation by noradrenaline probably through structural effects. Post-translationally, may undergo ubiquitin-mediated proteasomal degradation.

The protein localises to the mitochondrion inner membrane. The catalysed reaction is H(+)(in) = H(+)(out). With respect to regulation, has no constitutive proton transporter activity and has to be activated by long-chain fatty acids/LCFAs. Inhibited by purine nucleotides. Both purine nucleotides and LCFAs bind the cytosolic side of the transporter and directly compete to activate or inhibit it. Activated by noradrenaline and reactive oxygen species. Despite lacking canonical translational encoding for selenocysteine, a small pool of the protein has been observed to selectively incorporate selenocysteine at 'Cys-256'. Selenocysteine-modified protein is highly sensitive to redox modification and may constitute a pool of protein highly sensitive to activation by elevated levels of reactive oxygen species (ROS). Mitochondrial protein responsible for thermogenic respiration, a specialized capacity of brown adipose tissue and beige fat that participates in non-shivering adaptive thermogenesis to temperature and diet variations and more generally to the regulation of energy balance. Functions as a long-chain fatty acid/LCFA and proton symporter, simultaneously transporting one LCFA and one proton through the inner mitochondrial membrane. However, LCFAs remaining associated with the transporter via their hydrophobic tails, it results in an apparent transport of protons activated by LCFAs. Thereby, dissipates the mitochondrial proton gradient and converts the energy of substrate oxydation into heat instead of ATP. Regulates the production of reactive oxygen species/ROS by mitochondria. The polypeptide is Mitochondrial brown fat uncoupling protein 1 (Bos taurus (Bovine)).